Here is a 233-residue protein sequence, read N- to C-terminus: Protease inhibitor Egf1.0 (233 aa).

Residues 1–28 form the signal peptide; the sequence is MYIDTGIMSNNIFLFAFFALVGLTRIEA. A TIL domain is found at 52–104; that stretch reads CRENEHYNSTRIECEEECNDRNNKLCYRFQQFCWCNEGYIRNSSHICVKLEDC. A disordered region spans residues 201 to 233; sequence FGKPKNSSAEKKPLETETQAQKFNGIIDQETLD.

It belongs to the polydnaviridae EGF-like motif protein family. In terms of assembly, interacts with host PAP1 and PAP3.

Its function is as follows. Counteracts the host humoral immune response by inhibiting the processing and the amidolytic activity of host PAP3. Thereby, melanization of host hemolymph, normally producing several reactive intermediates toxic for viruses, is deregulated and proper immune response cannot occur. The protein is Protease inhibitor Egf1.0 (O12) of Microplitis demolitor (Parasitoid wasp).